The following is a 204-amino-acid chain: Endothelin-3 (204 aa).

A signal peptide spans 1–17 (MELRLWFLFGLTVTSAA). The tract at residues 18–71 (GPVPRPQPGDAGRSGVPRAPSATKETMAMVATRGPSPRSSGQEQEPGPFGELAA) is disordered. Residues 18–80 (GPVPRPQPGD…AKGGPVRYRA (63 aa)) constitute a propeptide that is removed on maturation. Disulfide bonds link Cys-83–Cys-97 and Cys-85–Cys-93. Residues 104–204 (INTPERTVPY…KSRTDKARRL (101 aa)) constitute a propeptide that is removed on maturation. Residues 115–140 (LSNHRGSVRGRRSAGPSPQSSQPSRG) are disordered. A compositionally biased stretch (low complexity) spans 127-140 (SAGPSPQSSQPSRG). The interval 144-158 (CACAESQDRACVYFC) is endothelin-like. The tract at residues 166 to 204 (GASRTPETPDKEAGKPAGRATGGLHPRRLKSRTDKARRL) is disordered.

This sequence belongs to the endothelin/sarafotoxin family.

Its subcellular location is the secreted. Its function is as follows. Endothelins are endothelium-derived vasoconstrictor peptides. The chain is Endothelin-3 (EDN3) from Sus scrofa (Pig).